A 425-amino-acid polypeptide reads, in one-letter code: Dihydroorotase (425 aa).

2 residues coordinate Zn(2+): His-61 and His-63. Substrate is bound by residues 63 to 65 (HLR) and Asn-95. Asp-153, His-180, and His-233 together coordinate Zn(2+). Position 279 (Asn-279) interacts with substrate. A Zn(2+)-binding site is contributed by Asp-306. The active site involves Asp-306. His-310 is a binding site for substrate.

This sequence belongs to the metallo-dependent hydrolases superfamily. DHOase family. Class I DHOase subfamily. Requires Zn(2+) as cofactor.

It catalyses the reaction (S)-dihydroorotate + H2O = N-carbamoyl-L-aspartate + H(+). The protein operates within pyrimidine metabolism; UMP biosynthesis via de novo pathway; (S)-dihydroorotate from bicarbonate: step 3/3. Its function is as follows. Catalyzes the reversible cyclization of carbamoyl aspartate to dihydroorotate. The chain is Dihydroorotase from Geotalea daltonii (strain DSM 22248 / JCM 15807 / FRC-32) (Geobacter daltonii).